Reading from the N-terminus, the 304-residue chain is Coenzyme PQQ synthesis protein B (304 aa).

This sequence belongs to the PqqB family.

The protein operates within cofactor biosynthesis; pyrroloquinoline quinone biosynthesis. Its function is as follows. May be involved in the transport of PQQ or its precursor to the periplasm. The sequence is that of Coenzyme PQQ synthesis protein B from Pseudomonas paraeruginosa (strain DSM 24068 / PA7) (Pseudomonas aeruginosa (strain PA7)).